We begin with the raw amino-acid sequence, 129 residues long: Glycine cleavage system H protein (129 aa).

The Lipoyl-binding domain maps to 23-104 (TVTVGITQHA…SYSAWLFKLK (82 aa)). Lysine 64 is subject to N6-lipoyllysine.

Belongs to the GcvH family. As to quaternary structure, the glycine cleavage system is composed of four proteins: P, T, L and H. (R)-lipoate serves as cofactor.

Functionally, the glycine cleavage system catalyzes the degradation of glycine. The H protein shuttles the methylamine group of glycine from the P protein to the T protein. In Nitrosomonas eutropha (strain DSM 101675 / C91 / Nm57), this protein is Glycine cleavage system H protein.